The primary structure comprises 586 residues: Kelch-like protein 7 (586 aa).

The 68-residue stretch at 44-111 (CDVILMVQER…AYTARISVNS (68 aa)) folds into the BTB domain. The region spanning 146 to 248 (CLGISVLAEC…SKNFLSKTVQ (103 aa)) is the BACK domain. Kelch repeat units lie at residues 294–336 (RIAL…FWDN), 337–382 (VVYI…AAEG), 383–430 (KIYT…EANG), 431–481 (LIYV…FVKD), 483–528 (IFAV…AVGS), and 530–575 (IYVL…CVVD).

In terms of assembly, homodimer. Component of the BCR(KLHL7) E3 ubiquitin ligase complex, at least composed of CUL3 and KLHL7 and RBX1.

It localises to the nucleus. The protein localises to the cytoplasm. It functions in the pathway protein modification; protein ubiquitination. Substrate-specific adapter of a BCR (BTB-CUL3-RBX1) E3 ubiquitin ligase complex. The BCR(KLHL7) complex acts by mediating ubiquitination and subsequent degradation of substrate proteins. Probably mediates 'Lys-48'-linked ubiquitination. This chain is Kelch-like protein 7 (Klhl7), found in Rattus norvegicus (Rat).